Consider the following 266-residue polypeptide: Indole-3-glycerol phosphate synthase (266 aa).

It belongs to the TrpC family.

It catalyses the reaction 1-(2-carboxyphenylamino)-1-deoxy-D-ribulose 5-phosphate + H(+) = (1S,2R)-1-C-(indol-3-yl)glycerol 3-phosphate + CO2 + H2O. It functions in the pathway amino-acid biosynthesis; L-tryptophan biosynthesis; L-tryptophan from chorismate: step 4/5. The protein is Indole-3-glycerol phosphate synthase of Herminiimonas arsenicoxydans.